The primary structure comprises 324 residues: UDP-N-acetylenolpyruvoylglucosamine reductase (324 aa).

Positions 38-231 (AGGSARRLYV…SRERIRSLLK (194 aa)) constitute an FAD-binding PCMH-type domain. The active site involves Arg195. Ser246 (proton donor) is an active-site residue. Glu316 is a catalytic residue.

It belongs to the MurB family. Requires FAD as cofactor.

Its subcellular location is the cytoplasm. It catalyses the reaction UDP-N-acetyl-alpha-D-muramate + NADP(+) = UDP-N-acetyl-3-O-(1-carboxyvinyl)-alpha-D-glucosamine + NADPH + H(+). Its pathway is cell wall biogenesis; peptidoglycan biosynthesis. Its function is as follows. Cell wall formation. The polypeptide is UDP-N-acetylenolpyruvoylglucosamine reductase (Thiobacillus denitrificans (strain ATCC 25259 / T1)).